A 361-amino-acid polypeptide reads, in one-letter code: Probable dual-specificity RNA methyltransferase RlmN (361 aa).

The Proton acceptor role is filled by Glu-104. The 234-residue stretch at 110 to 343 (HEYGNSVCVT…VTIRREQGHD (234 aa)) folds into the Radical SAM core domain. The cysteines at positions 117 and 348 are disulfide-linked. [4Fe-4S] cluster contacts are provided by Cys-124, Cys-128, and Cys-131. Residues 174–175 (GE), Ser-206, 229–231 (SLH), and Asn-305 each bind S-adenosyl-L-methionine. Cys-348 (S-methylcysteine intermediate) is an active-site residue.

It belongs to the radical SAM superfamily. RlmN family. [4Fe-4S] cluster serves as cofactor.

It localises to the cytoplasm. It carries out the reaction adenosine(2503) in 23S rRNA + 2 reduced [2Fe-2S]-[ferredoxin] + 2 S-adenosyl-L-methionine = 2-methyladenosine(2503) in 23S rRNA + 5'-deoxyadenosine + L-methionine + 2 oxidized [2Fe-2S]-[ferredoxin] + S-adenosyl-L-homocysteine. The enzyme catalyses adenosine(37) in tRNA + 2 reduced [2Fe-2S]-[ferredoxin] + 2 S-adenosyl-L-methionine = 2-methyladenosine(37) in tRNA + 5'-deoxyadenosine + L-methionine + 2 oxidized [2Fe-2S]-[ferredoxin] + S-adenosyl-L-homocysteine. Specifically methylates position 2 of adenine 2503 in 23S rRNA and position 2 of adenine 37 in tRNAs. This is Probable dual-specificity RNA methyltransferase RlmN from Bacillus licheniformis (strain ATCC 14580 / DSM 13 / JCM 2505 / CCUG 7422 / NBRC 12200 / NCIMB 9375 / NCTC 10341 / NRRL NRS-1264 / Gibson 46).